Here is a 737-residue protein sequence, read N- to C-terminus: Catalase-peroxidase (737 aa).

Positions 1-33 (MPEATEHPPIGEAQTEPAQSGCPMVIKPPVEGG) are disordered. Positions 107-235 (WHAAGTYRVQ…LGASHMGLIY (129 aa)) form a cross-link, tryptophyl-tyrosyl-methioninium (Trp-Tyr) (with M-261). Histidine 108 (proton acceptor) is an active-site residue. The segment at residues 235 to 261 (YVNPEGPEGNPDPIAAAIDIRETFGRM) is a cross-link (tryptophyl-tyrosyl-methioninium (Tyr-Met) (with W-107)). Histidine 276 serves as a coordination point for heme.

This sequence belongs to the peroxidase family. Peroxidase/catalase subfamily. Homodimer or homotetramer. Heme b is required as a cofactor. Post-translationally, formation of the three residue Trp-Tyr-Met cross-link is important for the catalase, but not the peroxidase activity of the enzyme.

The catalysed reaction is H2O2 + AH2 = A + 2 H2O. It catalyses the reaction 2 H2O2 = O2 + 2 H2O. In terms of biological role, bifunctional enzyme with both catalase and broad-spectrum peroxidase activity. May play a role in polycyclic aromatic hydrocarbon (PAH) metabolism. The sequence is that of Catalase-peroxidase from Mycolicibacterium vanbaalenii (Mycobacterium vanbaalenii).